We begin with the raw amino-acid sequence, 499 residues long: Lysine--tRNA ligase (499 aa).

The Mg(2+) site is built by E408 and E415.

This sequence belongs to the class-II aminoacyl-tRNA synthetase family. Homodimer. Mg(2+) is required as a cofactor.

It localises to the cytoplasm. It carries out the reaction tRNA(Lys) + L-lysine + ATP = L-lysyl-tRNA(Lys) + AMP + diphosphate. This is Lysine--tRNA ligase from Bacillus thuringiensis (strain Al Hakam).